Here is a 200-residue protein sequence, read N- to C-terminus: Holliday junction resolvase RecU (200 aa).

Residues 1–24 (MTIRYPNGKRYDQASQPHKTPIKK) form a disordered region. Mg(2+) is bound by residues Thr85, Asp87, Glu100, and Gln119.

The protein belongs to the RecU family. Mg(2+) serves as cofactor.

Its subcellular location is the cytoplasm. It carries out the reaction Endonucleolytic cleavage at a junction such as a reciprocal single-stranded crossover between two homologous DNA duplexes (Holliday junction).. Functionally, endonuclease that resolves Holliday junction intermediates in genetic recombination. Cleaves mobile four-strand junctions by introducing symmetrical nicks in paired strands. Promotes annealing of linear ssDNA with homologous dsDNA. Required for DNA repair, homologous recombination and chromosome segregation. In Bacillus mycoides (strain KBAB4) (Bacillus weihenstephanensis), this protein is Holliday junction resolvase RecU.